Here is a 796-residue protein sequence, read N- to C-terminus: Transcription factor kayak (796 aa).

4 disordered regions span residues 109-132, 315-341, 374-429, and 442-490; these read AYQQ…SNTS, VVNN…SNTV, FNCG…GSNG, and VGSA…RNKL. Low complexity predominate over residues 402-429; that stretch reads TTDTSSAATDSTSYQNGGHMFGNNGSNG. A compositionally biased stretch (polar residues) spans 447 to 457; it reads RGTSSTSNNAT. In terms of domain architecture, bZIP spans 478–541; that stretch reads EEKRRVRRER…HQLNFVLEAH (64 aa). Positions 480–499 are basic motif; it reads KRRVRRERNKLAAARCRKRR. Residues 506-534 are leucine-zipper; it reads LSEEVDGLLKKNEDLKKEIEILTNTRHQL. The disordered stretch occupies residues 569 to 601; sequence SSGSNGSHHHNSNSNNSNNNNSNNNNNSNSNDS. Position 621 is a phosphoserine (Ser621). 2 disordered regions span residues 642-661 and 774-796; these read PHDA…PPAA and SSQN…LVSL.

This sequence belongs to the bZIP family. Fos subfamily. Homodimer. Heterodimer with Jra. The kay-Jra heterodimer binds more stably to the AP-1 site than either of the two proteins alone.

It localises to the nucleus. Its function is as follows. Developmentally regulated transcription factor AP-1 binds and recognizes the enhancer DNA sequence: 5'-TGA[CG]TCA-3'. May play a role in the function or determination of a particular subset of cells in the developing embryo. It is able to carry out its function either independently of or in conjunction with Jra. The polypeptide is Transcription factor kayak (Drosophila grimshawi (Hawaiian fruit fly)).